The primary structure comprises 187 residues: Large ribosomal subunit protein uL22 (187 aa).

Residues 155–187 (DAVSRAAPTDDAPAKKKLSKKKLARQKEKMMRE) are disordered. Basic residues predominate over residues 169-178 (KKKLSKKKLA).

It belongs to the universal ribosomal protein uL22 family.

The protein is Large ribosomal subunit protein uL22 (RpL17) of Lonomia obliqua (Moth).